We begin with the raw amino-acid sequence, 250 residues long: Ubiquinone/menaquinone biosynthesis C-methyltransferase UbiE (250 aa).

Residues Thr73, Asp94, 122-123 (NA), and Ser139 each bind S-adenosyl-L-methionine.

The protein belongs to the class I-like SAM-binding methyltransferase superfamily. MenG/UbiE family.

It catalyses the reaction a 2-demethylmenaquinol + S-adenosyl-L-methionine = a menaquinol + S-adenosyl-L-homocysteine + H(+). It carries out the reaction a 2-methoxy-6-(all-trans-polyprenyl)benzene-1,4-diol + S-adenosyl-L-methionine = a 5-methoxy-2-methyl-3-(all-trans-polyprenyl)benzene-1,4-diol + S-adenosyl-L-homocysteine + H(+). The protein operates within quinol/quinone metabolism; menaquinone biosynthesis; menaquinol from 1,4-dihydroxy-2-naphthoate: step 2/2. Its pathway is cofactor biosynthesis; ubiquinone biosynthesis. Functionally, methyltransferase required for the conversion of demethylmenaquinol (DMKH2) to menaquinol (MKH2) and the conversion of 2-polyprenyl-6-methoxy-1,4-benzoquinol (DDMQH2) to 2-polyprenyl-3-methyl-6-methoxy-1,4-benzoquinol (DMQH2). This is Ubiquinone/menaquinone biosynthesis C-methyltransferase UbiE from Francisella tularensis subsp. tularensis (strain WY96-3418).